The following is a 110-amino-acid chain: Small ribosomal subunit protein uS10 (110 aa).

It belongs to the universal ribosomal protein uS10 family. As to quaternary structure, part of the 30S ribosomal subunit.

In terms of biological role, involved in the binding of tRNA to the ribosomes. This Coxiella burnetii (strain Dugway 5J108-111) protein is Small ribosomal subunit protein uS10.